The sequence spans 118 residues: Large ribosomal subunit protein uL22 (118 aa).

This sequence belongs to the universal ribosomal protein uL22 family. In terms of assembly, part of the 50S ribosomal subunit.

This protein binds specifically to 23S rRNA; its binding is stimulated by other ribosomal proteins, e.g. L4, L17, and L20. It is important during the early stages of 50S assembly. It makes multiple contacts with different domains of the 23S rRNA in the assembled 50S subunit and ribosome. In terms of biological role, the globular domain of the protein is located near the polypeptide exit tunnel on the outside of the subunit, while an extended beta-hairpin is found that lines the wall of the exit tunnel in the center of the 70S ribosome. This chain is Large ribosomal subunit protein uL22, found in Nostoc punctiforme (strain ATCC 29133 / PCC 73102).